Consider the following 537-residue polypeptide: Synaptotagmin-C (537 aa).

The Vesicular segment spans residues 1–52 (MSGDGEDELCRNALALVNELCFSVRGNHNNEKCIEFSYLLRDRDRTRHIETD). A helical transmembrane segment spans residues 53-78 (ISVSLLSVIVTFCGIVLLGVSLFVSW). Topologically, residues 79 to 537 (KLCWIPWRDK…TIVVESPHSV (459 aa)) are cytoplasmic. Disordered stretches follow at residues 92 to 111 (PQRRDSQHHPHQHLHHHHSH) and 142 to 200 (IKLS…EFGT). The segment covering 100-110 (HPHQHLHHHHS) has biased composition (basic residues). The span at 143–174 (KLSQTSPDIPVDTSSGSKENNIPNAHSQQQVS) shows a compositional bias: polar residues. Residues 228 to 477 (EAKKHQKVNC…VIGMCRVGNA (250 aa)) form a phospholipid binding region. C2 domains follow at residues 236-357 (NCGR…TIWR) and 368-501 (DLGE…EQWH). Ca(2+) contacts are provided by Asp-267, Asp-273, Asp-325, Phe-326, Asp-327, Ser-330, Asp-333, Asp-399, Asp-405, Asp-459, and Asp-461.

It belongs to the synaptotagmin family. As to quaternary structure, homodimer or homotrimer (possible). Requires Ca(2+) as cofactor.

The protein resides in the cytoplasmic vesicle. It localises to the secretory vesicle. Its subcellular location is the synaptic vesicle membrane. The protein localises to the synapse. Functionally, may have a regulatory role in the membrane interactions during trafficking of synaptic vesicles at the active zone of the synapse. It binds acidic phospholipids with a specificity that requires the presence of both an acidic head group and a diacyl backbone. The chain is Synaptotagmin-C (P65-C) from Diplobatis ommata (Ocellated electric ray).